A 235-amino-acid chain; its full sequence is Ribosomal RNA small subunit methyltransferase G (235 aa).

Residues G74, L79, 124–125, and R142 contribute to the S-adenosyl-L-methionine site; that span reads AE. The interval 211-235 is disordered; the sequence is RRRAAKPGRNKSGRTARSRGRTGRR. The span at 213 to 235 shows a compositional bias: basic residues; it reads RAAKPGRNKSGRTARSRGRTGRR.

Belongs to the methyltransferase superfamily. RNA methyltransferase RsmG family.

It localises to the cytoplasm. Specifically methylates the N7 position of guanine in position 518 of 16S rRNA. In Mycolicibacterium smegmatis (strain ATCC 700084 / mc(2)155) (Mycobacterium smegmatis), this protein is Ribosomal RNA small subunit methyltransferase G.